The primary structure comprises 122 residues: MTSTVEFINRWQRIALLSQSLLELAQRGEWDLLLQQEVSYLQSIETVMEKQTPPGITRSIQDMVAGYIKQTLDNEQLLKGLLQQRLDELSSLIGQSTRQKSLNYAYGRLSGMLLVPDAPGAS.

The required for homodimerization stretch occupies residues 1–50; it reads MTSTVEFINRWQRIALLSQSLLELAQRGEWDLLLQQEVSYLQSIETVMEK. Positions 60 to 98 are fliD binding; it reads IQDMVAGYIKQTLDNEQLLKGLLQQRLDELSSLIGQSTR.

Belongs to the FliT family. In terms of assembly, homodimer. Interacts with FliD and FlhC.

It localises to the cytoplasm. Its subcellular location is the cytosol. Dual-function protein that regulates the transcription of class 2 flagellar operons and that also acts as an export chaperone for the filament-capping protein FliD. As a transcriptional regulator, acts as an anti-FlhDC factor; it directly binds FlhC, thus inhibiting the binding of the FlhC/FlhD complex to class 2 promoters, resulting in decreased expression of class 2 flagellar operons. As a chaperone, effects FliD transition to the membrane by preventing its premature polymerization, and by directing it to the export apparatus. The chain is Flagellar protein FliT from Salmonella gallinarum (strain 287/91 / NCTC 13346).